Here is a 372-residue protein sequence, read N- to C-terminus: tRNA-specific 2-thiouridylase MnmA 1 (372 aa).

Residues 26–33 (AISGGVDS) and methionine 52 each bind ATP. The active-site Nucleophile is the cysteine 118. A disulfide bond links cysteine 118 and cysteine 214. Glycine 142 contributes to the ATP binding site. The interval 164–166 (KDQ) is interaction with tRNA. The active-site Cysteine persulfide intermediate is the cysteine 214.

The protein belongs to the MnmA/TRMU family.

Its subcellular location is the cytoplasm. The catalysed reaction is S-sulfanyl-L-cysteinyl-[protein] + uridine(34) in tRNA + AH2 + ATP = 2-thiouridine(34) in tRNA + L-cysteinyl-[protein] + A + AMP + diphosphate + H(+). In terms of biological role, catalyzes the 2-thiolation of uridine at the wobble position (U34) of tRNA, leading to the formation of s(2)U34. The protein is tRNA-specific 2-thiouridylase MnmA 1 of Syntrophus aciditrophicus (strain SB).